A 347-amino-acid polypeptide reads, in one-letter code: Protein-glutamate methylesterase/protein-glutamine glutaminase (347 aa).

The Response regulatory domain occupies Glu-3–Glu-119. Asp-53 is subject to 4-aspartylphosphate. The segment at Pro-132–Ala-154 is disordered. The CheB-type methylesterase domain occupies Glu-152–Thr-346. Catalysis depends on residues Ser-164, His-191, and Asp-288.

It belongs to the CheB family. Post-translationally, phosphorylated by CheA. Phosphorylation of the N-terminal regulatory domain activates the methylesterase activity.

The protein localises to the cytoplasm. It carries out the reaction [protein]-L-glutamate 5-O-methyl ester + H2O = L-glutamyl-[protein] + methanol + H(+). The catalysed reaction is L-glutaminyl-[protein] + H2O = L-glutamyl-[protein] + NH4(+). Its function is as follows. Involved in the modulation of the chemotaxis system; catalyzes the demethylation of specific methylglutamate residues introduced into the Htr transducer proteins (methyl-accepting chemotaxis proteins) by CheR. Also required for Htr deamidations, at least at a specific glutamine-glutamate pair in HTR-II and a specific aspartate-glutamine pair in Htr4. This Halobacterium salinarum (strain ATCC 29341 / DSM 671 / R1) protein is Protein-glutamate methylesterase/protein-glutamine glutaminase.